Reading from the N-terminus, the 704-residue chain is ATP-dependent zinc metalloprotease FtsH (704 aa).

The Cytoplasmic segment spans residues 1-17 (MADSAKTPRGKKRRPFT). A helical transmembrane segment spans residues 18-38 (GLALWIIVALLLGMAMFSLFG). Residues 39–127 (RDGYQQIDTQ…DEIASSSWWS (89 aa)) are Extracellular-facing. The helical transmembrane segment at 128 to 148 (TLLLSFLPLLIFIGLFWFLIM) threads the bilayer. Over 149-704 (NAQGGGKAMQ…GSAGTDGTGR (556 aa)) the chain is Cytoplasmic. Residue 217 to 224 (GPPGTGKT) participates in ATP binding. A Zn(2+)-binding site is contributed by histidine 439. Residue glutamate 440 is part of the active site. Histidine 443 and aspartate 515 together coordinate Zn(2+). The tract at residues 624-704 (PREVWISSTE…GSAGTDGTGR (81 aa)) is disordered. The span at 681–704 (PHGGEPGGGGYGYDGSAGTDGTGR) shows a compositional bias: gly residues.

The protein in the central section; belongs to the AAA ATPase family. In the C-terminal section; belongs to the peptidase M41 family. In terms of assembly, homohexamer. It depends on Zn(2+) as a cofactor.

It localises to the cell membrane. Acts as a processive, ATP-dependent zinc metallopeptidase for both cytoplasmic and membrane proteins. Plays a role in the quality control of integral membrane proteins. The chain is ATP-dependent zinc metalloprotease FtsH from Brachybacterium faecium (strain ATCC 43885 / DSM 4810 / JCM 11609 / LMG 19847 / NBRC 14762 / NCIMB 9860 / 6-10).